The sequence spans 406 residues: Multidrug resistance protein MdtG (406 aa).

The next 11 membrane-spanning stretches (helical) occupy residues 16–36, 56–76, 90–110, 113–133, 144–164, 171–191, 222–242, 254–274, 288–308, 317–337, and 376–396; these read VAWL…PFLP, LVFS…GGLA, LGMA…QFLL, ALLG…ATQV, TLST…GLLA, PVFF…LFFT, LFVT…ILTL, IAFI…LSAP, ILIT…FVQT, FLLG…LVYN, and AVFC…WNSL.

It belongs to the major facilitator superfamily. DHA1 family. MdtG (TC 2.A.1.2.20) subfamily.

It is found in the cell inner membrane. This Citrobacter koseri (strain ATCC BAA-895 / CDC 4225-83 / SGSC4696) protein is Multidrug resistance protein MdtG.